A 543-amino-acid chain; its full sequence is Glucose-6-phosphate isomerase (543 aa).

Residue Glu353 is the Proton donor of the active site. Active-site residues include His384 and Lys512.

This sequence belongs to the GPI family.

The protein localises to the cytoplasm. It carries out the reaction alpha-D-glucose 6-phosphate = beta-D-fructose 6-phosphate. Its pathway is carbohydrate biosynthesis; gluconeogenesis. The protein operates within carbohydrate degradation; glycolysis; D-glyceraldehyde 3-phosphate and glycerone phosphate from D-glucose: step 2/4. Functionally, catalyzes the reversible isomerization of glucose-6-phosphate to fructose-6-phosphate. In Christiangramia forsetii (strain DSM 17595 / CGMCC 1.15422 / KT0803) (Gramella forsetii), this protein is Glucose-6-phosphate isomerase.